Consider the following 802-residue polypeptide: Epithelial sodium channel subunit delta (802 aa).

Residues 1 to 250 (MRAVLSQKTT…CSRGNRLKTT (250 aa)) are Cytoplasmic-facing. Positions 145–211 (KQPHGGALTS…PPPPKEGHQE (67 aa)) are disordered. Over residues 166-176 (CHLKGWQHRPT) the composition is skewed to basic residues. The segment covering 192–205 (PPRPGPPSAPPPPP) has biased composition (pro residues). A helical membrane pass occupies residues 251-271 (SWGLLSLGALVALCWQLGLLF). Topologically, residues 272-694 (ERHWHRPVLM…VPQLLSAMGS (423 aa)) are extracellular. N-linked (GlcNAc...) asparagine glycans are attached at residues asparagine 330 and asparagine 548. Residues 695–715 (LCSLWFGASVLSLLELLELLL) form a helical membrane-spanning segment. At 716 to 802 (DASALTLVLG…GPQPLETLDT (87 aa)) the chain is on the cytoplasmic side. The segment at 738–777 (RASPASGASSIKPEASQMPPPAGGTSDDPEPSGPHLPRVM) is disordered.

The protein belongs to the amiloride-sensitive sodium channel (TC 1.A.6) family. SCNN1D subfamily. As to quaternary structure, can form an alternative heterotrimeric epithelial sodium channel (ENaC), composed of a delta (SCNN1D), beta (SCNN1B), and gamma (SCNN1G) subunit, where the delta (SCNN1D) subunit replaces the alpha (SCNN1A) subunit. As to expression, not specifically expressed in epithelial cells.

The protein localises to the apical cell membrane. It catalyses the reaction Na(+)(in) = Na(+)(out). With respect to regulation, originally identified and characterized by its inhibition by the diuretic drug amiloride. Functionally, potential alternative pore-forming subunit of the epithelial sodium channel (ENaC), capable of replacing the alpha/SCNN1A subunit, creating a more active channel with distinct properties. ENaC functions in epithelial tissues, where it facilitates the electrodiffusion of sodium ions from the extracellular fluid through the apical membrane of cells, with water following osmotically, regulating sodium balance and fluid homeostasis. This subunit could also function independently as a sodium channel or assemble into other tissue-specific heterotrimeric sodium channels. Its function is as follows. ENaC channels including this isoform exhibit greater conductance. The chain is Epithelial sodium channel subunit delta from Homo sapiens (Human).